We begin with the raw amino-acid sequence, 585 residues long: 4-hydroxy-3-methylbut-2-en-1-yl diphosphate synthase (flavodoxin) (585 aa).

Positions 492, 495, 526, and 533 each coordinate [4Fe-4S] cluster.

This sequence belongs to the IspG family. [4Fe-4S] cluster serves as cofactor.

The enzyme catalyses (2E)-4-hydroxy-3-methylbut-2-enyl diphosphate + oxidized [flavodoxin] + H2O + 2 H(+) = 2-C-methyl-D-erythritol 2,4-cyclic diphosphate + reduced [flavodoxin]. Its pathway is isoprenoid biosynthesis; isopentenyl diphosphate biosynthesis via DXP pathway; isopentenyl diphosphate from 1-deoxy-D-xylulose 5-phosphate: step 5/6. Its function is as follows. Converts 2C-methyl-D-erythritol 2,4-cyclodiphosphate (ME-2,4cPP) into 1-hydroxy-2-methyl-2-(E)-butenyl 4-diphosphate. The protein is 4-hydroxy-3-methylbut-2-en-1-yl diphosphate synthase (flavodoxin) of Akkermansia muciniphila (strain ATCC BAA-835 / DSM 22959 / JCM 33894 / BCRC 81048 / CCUG 64013 / CIP 107961 / Muc).